The chain runs to 210 residues: Large ribosomal subunit protein uL3 (210 aa).

This sequence belongs to the universal ribosomal protein uL3 family. In terms of assembly, part of the 50S ribosomal subunit. Forms a cluster with proteins L14 and L19.

Functionally, one of the primary rRNA binding proteins, it binds directly near the 3'-end of the 23S rRNA, where it nucleates assembly of the 50S subunit. In Pediococcus pentosaceus (strain ATCC 25745 / CCUG 21536 / LMG 10740 / 183-1w), this protein is Large ribosomal subunit protein uL3.